Reading from the N-terminus, the 143-residue chain is Large ribosomal subunit protein uL15 (143 aa).

2 stretches are compositionally biased toward basic residues: residues 1–14 (MIRK…KRGS) and 23–38 (KKHR…GNAG). Residues 1–38 (MIRKSKKITKKRGSRTCGYGEAKKHRGAGHRGGRGNAG) are disordered.

This sequence belongs to the universal ribosomal protein uL15 family. Part of the 50S ribosomal subunit.

In terms of biological role, binds to the 23S rRNA. The protein is Large ribosomal subunit protein uL15 of Methanococcus maripaludis (strain DSM 14266 / JCM 13030 / NBRC 101832 / S2 / LL).